The primary structure comprises 146 residues: Hemoglobin subunit beta (146 aa).

Valine 1 is subject to N-acetylvaline. Residues 2 to 146 (HLTGEEKAAV…VANALAHKYH (145 aa)) form the Globin domain. Residue threonine 12 is modified to Phosphothreonine. Serine 44 carries the post-translational modification Phosphoserine. Lysine 59 carries the post-translational modification N6-acetyllysine. Histidine 63 contributes to the heme b binding site. Lysine 82 bears the N6-acetyllysine mark. Histidine 92 contacts heme b. The residue at position 93 (cysteine 93) is an S-nitrosocysteine. Lysine 144 carries the post-translational modification N6-acetyllysine.

Belongs to the globin family. In terms of assembly, heterotetramer of two alpha chains and two beta chains. As to expression, red blood cells.

In terms of biological role, involved in oxygen transport from the lung to the various peripheral tissues. This is Hemoglobin subunit beta (HBB) from Lutra lutra (European river otter).